We begin with the raw amino-acid sequence, 109 residues long: MSAFVTKAEEMIKSHPYFQLSASWCPDCVYANSIWNKLNVQDKVFVFDIGSLPRNEQEKWRIAFQKVVGSRNLPTIVVNGKFWGTESQLHRFEAKGTLEEELTKIGLLP.

One can recognise a Glutaredoxin domain in the interval 5 to 109; it reads VTKAEEMIKS…EELTKIGLLP (105 aa). A disulfide bridge connects residues Cys25 and Cys28.

The protein belongs to the glutaredoxin family. As to quaternary structure, monomer.

It localises to the cytoplasm. Functionally, glutathione-dependent oxidoreductase with lower activity compared to the other members of the glutaredoxin family. The disulfide bond functions as an electron carrier in the glutathione-dependent synthesis of deoxyribonucleotides by the enzyme ribonucleotide reductase. This chain is Glutaredoxin-8 (GRX8), found in Saccharomyces cerevisiae (strain ATCC 204508 / S288c) (Baker's yeast).